The chain runs to 563 residues: Efflux pump FUS6 (563 aa).

The disordered stretch occupies residues 1–30 (MPQPDKMAAVNNAMPQPAPEKSLSSDPQPE). A run of 5 helical transmembrane segments spans residues 39–59 (WLIFVAIALTTFLAALDTSII), 75–95 (LYVWIIDAYLLASTATIPIFA), 105–125 (SLTLIAVCIFTLGSGLCGGAH), 138–158 (GIGGGGILTMSEIVVCDMVSI), and 167–187 (IIGGVWAIAAVVAPVMGGAFA). N189 carries an N-linked (GlcNAc...) asparagine glycan. Helical transmembrane passes span 194 to 214 (WIFYINLPIAGVSLVALGLFL), 233 to 253 (WGGSVLLIGSVTSIVLALSWG), and 261 to 281 (GWQTIVPLVIGLLALVAFFAY). N299 carries an N-linked (GlcNAc...) asparagine glycan. Transmembrane regions (helical) follow at residues 305 to 325 (LLVISFIHSLLLYWVCYFLPV), 340 to 360 (VMLFPIACTSAPAGVAAGITI), 368 to 388 (VWHFTGFVLMSIACGLFTLLD), 401 to 421 (ILFGVGTGTVFTSTLPPILAS), 433 to 453 (AWTFIRNFGSIWGVAIPAAVF), and 509 to 529 (KVVWQVSLAFCLLGFILCFFV). N553 carries N-linked (GlcNAc...) asparagine glycosylation.

Belongs to the major facilitator superfamily. TCR/Tet family.

It is found in the membrane. In terms of biological role, efflux pump; part of the gene cluster that mediates the biosynthesis of the mycotoxin fusarin C. Within the cluster, FUS1, FUS2, FUS8 and FUS9 are sufficient for fusarin production. The other FUS cluster members are not essential for fusarin C biosynthesis. In Gibberella moniliformis (strain M3125 / FGSC 7600) (Maize ear and stalk rot fungus), this protein is Efflux pump FUS6.